Here is an 847-residue protein sequence, read N- to C-terminus: Alanine--tRNA ligase (847 aa).

Residues His554, His558, Cys656, and His660 each contribute to the Zn(2+) site.

Belongs to the class-II aminoacyl-tRNA synthetase family. Requires Zn(2+) as cofactor.

Its subcellular location is the cytoplasm. It carries out the reaction tRNA(Ala) + L-alanine + ATP = L-alanyl-tRNA(Ala) + AMP + diphosphate. Its function is as follows. Catalyzes the attachment of alanine to tRNA(Ala) in a two-step reaction: alanine is first activated by ATP to form Ala-AMP and then transferred to the acceptor end of tRNA(Ala). Also edits incorrectly charged Ser-tRNA(Ala) and Gly-tRNA(Ala) via its editing domain. This is Alanine--tRNA ligase from Helicobacter pylori (strain Shi470).